The primary structure comprises 414 residues: 3-phosphoshikimate 1-carboxyvinyltransferase (414 aa).

Residues Lys-20, Ser-21, and Arg-25 each contribute to the 3-phosphoshikimate site. Lys-20 serves as a coordination point for phosphoenolpyruvate. Gly-85 and Arg-113 together coordinate phosphoenolpyruvate. 3-phosphoshikimate-binding residues include Ser-154, Ser-155, Gln-156, Ser-181, Asp-296, and Lys-323. Residue Gln-156 coordinates phosphoenolpyruvate. Residue Asp-296 is the Proton acceptor of the active site. Phosphoenolpyruvate contacts are provided by Arg-327, Arg-371, and Lys-395.

This sequence belongs to the EPSP synthase family. Monomer.

It is found in the cytoplasm. The catalysed reaction is 3-phosphoshikimate + phosphoenolpyruvate = 5-O-(1-carboxyvinyl)-3-phosphoshikimate + phosphate. It participates in metabolic intermediate biosynthesis; chorismate biosynthesis. Functionally, catalyzes the transfer of the enolpyruvyl moiety of phosphoenolpyruvate (PEP) to the 5-hydroxyl of shikimate-3-phosphate (S3P) to produce enolpyruvyl shikimate-3-phosphate and inorganic phosphate. The sequence is that of 3-phosphoshikimate 1-carboxyvinyltransferase from Saccharolobus islandicus (strain Y.G.57.14 / Yellowstone #1) (Sulfolobus islandicus).